The chain runs to 180 residues: tRNA-splicing endonuclease (180 aa).

Active-site residues include Tyr117, His125, and Lys156.

The protein belongs to the tRNA-intron endonuclease family. Archaeal short subfamily. In terms of assembly, homotetramer; although the tetramer contains four active sites, only two participate in the cleavage. Therefore, it should be considered as a dimer of dimers.

It carries out the reaction pretRNA = a 3'-half-tRNA molecule with a 5'-OH end + a 5'-half-tRNA molecule with a 2',3'-cyclic phosphate end + an intron with a 2',3'-cyclic phosphate and a 5'-hydroxyl terminus.. Its function is as follows. Endonuclease that removes tRNA introns. Cleaves pre-tRNA at the 5'- and 3'-splice sites to release the intron. The products are an intron and two tRNA half-molecules bearing 2',3' cyclic phosphate and 5'-OH termini. Recognizes a pseudosymmetric substrate in which 2 bulged loops of 3 bases are separated by a stem of 4 bp. This chain is tRNA-splicing endonuclease, found in Sulfurisphaera tokodaii (strain DSM 16993 / JCM 10545 / NBRC 100140 / 7) (Sulfolobus tokodaii).